The primary structure comprises 251 residues: 7-cyano-7-deazaguanine synthase (251 aa).

The segment at 1–21 is disordered; the sequence is MSDLPRHSPRRQHAGESAVTA. Residue 35-45 coordinates ATP; it reads YSGGMDSYTVL. Zn(2+) is bound by residues C212, C220, C223, and C226.

The protein belongs to the QueC family. Zn(2+) is required as a cofactor.

It carries out the reaction 7-carboxy-7-deazaguanine + NH4(+) + ATP = 7-cyano-7-deazaguanine + ADP + phosphate + H2O + H(+). It functions in the pathway purine metabolism; 7-cyano-7-deazaguanine biosynthesis. In terms of biological role, catalyzes the ATP-dependent conversion of 7-carboxy-7-deazaguanine (CDG) to 7-cyano-7-deazaguanine (preQ(0)). In Chromohalobacter salexigens (strain ATCC BAA-138 / DSM 3043 / CIP 106854 / NCIMB 13768 / 1H11), this protein is 7-cyano-7-deazaguanine synthase.